Consider the following 427-residue polypeptide: Glutamate-1-semialdehyde 2,1-aminomutase (427 aa).

At Lys-265 the chain carries N6-(pyridoxal phosphate)lysine.

This sequence belongs to the class-III pyridoxal-phosphate-dependent aminotransferase family. HemL subfamily. Homodimer. Pyridoxal 5'-phosphate is required as a cofactor.

It is found in the cytoplasm. The catalysed reaction is (S)-4-amino-5-oxopentanoate = 5-aminolevulinate. It functions in the pathway porphyrin-containing compound metabolism; protoporphyrin-IX biosynthesis; 5-aminolevulinate from L-glutamyl-tRNA(Glu): step 2/2. The protein is Glutamate-1-semialdehyde 2,1-aminomutase of Pseudomonas paraeruginosa (strain DSM 24068 / PA7) (Pseudomonas aeruginosa (strain PA7)).